Consider the following 574-residue polypeptide: Sulfate adenylyltransferase (574 aa).

Residues 1-169 form an N-terminal region; it reads MANSPHGGVL…IEAVNKLNHY (169 aa). The catalytic stretch occupies residues 170-394; the sequence is DYVALRYSPA…LRESSPPRAT (225 aa). Glutamine 197 contributes to the sulfate binding site. ATP is bound by residues 197–200 and 291–294; these read QTRN and GRDH. Catalysis depends on residues threonine 198, arginine 199, and asparagine 200. A sulfate-binding site is contributed by arginine 199. Alanine 295 contacts sulfate. Valine 333 lines the ATP pocket. The tract at residues 395-574 is allosteric regulation domain; adenylyl-sulfate kinase-like; sequence QGFTIFLTGY…LESEGYFDRL (180 aa). 3'-phosphoadenylyl sulfate contacts are provided by residues 434-437, arginine 451, 477-478, and arginine 516; these read DTVR and IA.

It in the N-terminal section; belongs to the sulfate adenylyltransferase family. This sequence in the C-terminal section; belongs to the APS kinase family. In terms of assembly, homohexamer. Dimer of trimers.

It is found in the cytoplasm. The enzyme catalyses sulfate + ATP + H(+) = adenosine 5'-phosphosulfate + diphosphate. The protein operates within sulfur metabolism; hydrogen sulfide biosynthesis; sulfite from sulfate: step 1/3. Its activity is regulated as follows. Allosterically inhibited by 3'-phosphoadenosine 5'-phosphosulfate (PAPS). In terms of biological role, catalyzes the first intracellular reaction of sulfate assimilation, forming adenosine-5'-phosphosulfate (APS) from inorganic sulfate and ATP. Plays an important role in sulfate activation as a component of the biosynthesis pathway of sulfur-containing amino acids. This Aspergillus terreus (strain NIH 2624 / FGSC A1156) protein is Sulfate adenylyltransferase.